Here is a 164-residue protein sequence, read N- to C-terminus: Galectin-3 (164 aa).

A Galectin domain is found at 9 to 154; the sequence is STVDLSEPLK…FSDVLGVTVL (146 aa). N45, R64, N73, R81, E84, and N138 together coordinate a carbohydrate.

As to quaternary structure, homotetramer. Oligomerization is required for carbohydrate binding.

It localises to the secreted. The protein localises to the extracellular space. Its subcellular location is the extracellular matrix. It is found in the cell wall. In terms of biological role, binds complex carbohydrates, such as chitooligosaccharides. Does not bind lactose. May play a role in fruiting body formation. The polypeptide is Galectin-3 (Cgl3) (Coprinopsis cinerea (Inky cap fungus)).